The chain runs to 227 residues: Ubiquitin domain-containing protein 1 (227 aa).

Residues 1 to 35 (MGNCVGRQRRERPAAPGHPRKRAGRNEPLKKERLK) are disordered. A compositionally biased stretch (basic and acidic residues) spans 24-35 (GRNEPLKKERLK). The Ubiquitin-like domain maps to 149-224 (FPLKVRLSTG…IQVIINQPPP (76 aa)).

Interacts with UBTD1.

May be involved in the regulation of cellular senescence through a positive feedback loop with TP53. Is a TP53 downstream target gene that increases the stability of TP53 protein by promoting the ubiquitination and degradation of MDM2. The sequence is that of Ubiquitin domain-containing protein 1 (UBTD1) from Homo sapiens (Human).